Here is a 409-residue protein sequence, read N- to C-terminus: MSKKVEKVVLAYSGGLDTSIILKWLQTTYGAEVVTFTADLGQGEELEPARQKALLLGIKPENIFIEDLREEFVRDYVFPMFRANAVYEGQYLLGTSIARPLIAKKQIEIAEKVGADAVSHGATGKGNDQVRFELGYYALKPDITIIAPWREWDFKSREKLIAFAEQHQIPIAKDKRGEAPFSVDANLLHASSEGKVLEDPAQEVPDYVYSRTIDPQAAPDQPTYITIDFEKGDAVAIDGRTMSPATLLAKLNELGRANGIGRLDLVENRFVGMKSRGMYETPGGTILLVAHRGIEQITLDRGAAHLKDELMPKYAELIYNGFWFAPEREMLQAAIDHSQQYVSGQVRLKLYKGNVILVGRDSRYSLYDQDLVTFEEGAVAYDHRDAAGFIKLNALRLRTLGQRKKKLGL.

ATP is bound by residues 11 to 19 and alanine 38; that span reads AYSGGLDTS. Positions 91 and 96 each coordinate L-citrulline. Glycine 121 is an ATP binding site. 3 residues coordinate L-aspartate: threonine 123, asparagine 127, and aspartate 128. L-citrulline is bound at residue asparagine 127. L-citrulline contacts are provided by arginine 131, serine 182, serine 191, glutamate 267, and tyrosine 279.

It belongs to the argininosuccinate synthase family. Type 1 subfamily. Homotetramer.

Its subcellular location is the cytoplasm. It catalyses the reaction L-citrulline + L-aspartate + ATP = 2-(N(omega)-L-arginino)succinate + AMP + diphosphate + H(+). The protein operates within amino-acid biosynthesis; L-arginine biosynthesis; L-arginine from L-ornithine and carbamoyl phosphate: step 2/3. The protein is Argininosuccinate synthase of Nitrobacter hamburgensis (strain DSM 10229 / NCIMB 13809 / X14).